The primary structure comprises 1850 residues: Vitellogenin-2 (1850 aa).

A signal peptide spans 1-15 (MRGIILALVLTLVGS). One can recognise a Vitellogenin domain in the interval 24-662 (FNSRRSYLYN…SPRTMFPSAI (639 aa)). An N-linked (GlcNAc...) asparagine glycan is attached at asparagine 604. The interval 935-984 (DAPLDVTEEPFQTSERASREHFAMQGPDSMPRKQSHSSREDLRRSTGKRA) is disordered. Residue asparagine 1094 is glycosylated (N-linked (GlcNAc...) asparagine). Disordered regions lie at residues 1115-1313 (GTEP…SSSS) and 1338-1362 (EFPKRKLPGDRATSRYSSTRSSHDT). Over residues 1122-1143 (TSSSSSSASSTATSSSSSSASS) the composition is skewed to low complexity. The segment covering 1156–1165 (DQVKQARNKD) has biased composition (basic and acidic residues). A compositionally biased stretch (low complexity) spans 1167 to 1266 (SSSSRSSKSS…SRSSSSSSKS (100 aa)). Residues asparagine 1177 and asparagine 1188 are each glycosylated (N-linked (GlcNAc...) asparagine). A compositionally biased stretch (basic residues) spans 1267–1277 (SSHHSHSHHSG). The span at 1278–1291 (HLNGSSSSSSSSRS) shows a compositional bias: low complexity. A glycan (N-linked (GlcNAc...) asparagine) is linked at asparagine 1280. Over residues 1338 to 1350 (EFPKRKLPGDRAT) the composition is skewed to basic and acidic residues. Asparagine 1417, asparagine 1597, and asparagine 1665 each carry an N-linked (GlcNAc...) asparagine glycan. The VWFD domain maps to 1579 to 1756 (ARCSVSYNKI…SWILEEAPCR (178 aa)). Disulfide bonds link cysteine 1581–cysteine 1719 and cysteine 1604–cysteine 1755.

Post-translationally, phosvitin, an egg yolk storage protein, is one of the most highly phosphorylated (10%) proteins in nature. In terms of processing, cathepsin D is responsible for intraoocytic processing of vitellogenin. May contain intrachain disulfide bonds. As to expression, after incorporation from serum via a specific receptor, it is cleaved into four fragments, heavy and light chain lipovitellins, phosphovitin and YGP40, and YGP40 is released into the yolk plasma before or during compartmentation of lipovitellin-phosvitin complex into the yolk granule.

In terms of biological role, precursor of the major egg-yolk proteins that are sources of nutrients during early development of oviparous organisms. Phosvitin is believed to be of importance in sequestering calcium, iron and other cations for the developing embryo. This is Vitellogenin-2 (VTG2) from Gallus gallus (Chicken).